We begin with the raw amino-acid sequence, 287 residues long: UPF0354 protein SSP1020 (287 aa).

This sequence belongs to the UPF0354 family.

The polypeptide is UPF0354 protein SSP1020 (Staphylococcus saprophyticus subsp. saprophyticus (strain ATCC 15305 / DSM 20229 / NCIMB 8711 / NCTC 7292 / S-41)).